The primary structure comprises 270 residues: Phosphatidylglycerol--prolipoprotein diacylglyceryl transferase (270 aa).

7 consecutive transmembrane segments (helical) span residues 10–30 (VAVAIGPLQIHWYGLMYLVGI), 56–76 (LIFWLAMGVIVGGRLGYVLFY), 92–112 (WKGGMAFHGGFVGVMIAAWWF), 120–140 (FFQLMDFVAPLVPIGLGAGRI), 175–195 (SQLYQFALEGVALFIILNLYA), 202–222 (MAVSGMFALFYGIFRFVVEFV), and 237–257 (VTMGQILSLPMIIAGLFLIWL). Position 139 (Arg-139) interacts with a 1,2-diacyl-sn-glycero-3-phospho-(1'-sn-glycerol).

Belongs to the Lgt family.

It localises to the cell inner membrane. It carries out the reaction L-cysteinyl-[prolipoprotein] + a 1,2-diacyl-sn-glycero-3-phospho-(1'-sn-glycerol) = an S-1,2-diacyl-sn-glyceryl-L-cysteinyl-[prolipoprotein] + sn-glycerol 1-phosphate + H(+). Its pathway is protein modification; lipoprotein biosynthesis (diacylglyceryl transfer). Catalyzes the transfer of the diacylglyceryl group from phosphatidylglycerol to the sulfhydryl group of the N-terminal cysteine of a prolipoprotein, the first step in the formation of mature lipoproteins. The sequence is that of Phosphatidylglycerol--prolipoprotein diacylglyceryl transferase from Pseudomonas syringae pv. tomato (strain ATCC BAA-871 / DC3000).